The sequence spans 345 residues: Phosphoribosylformylglycinamidine cyclo-ligase (345 aa).

It belongs to the AIR synthase family.

It localises to the cytoplasm. The enzyme catalyses 2-formamido-N(1)-(5-O-phospho-beta-D-ribosyl)acetamidine + ATP = 5-amino-1-(5-phospho-beta-D-ribosyl)imidazole + ADP + phosphate + H(+). Its pathway is purine metabolism; IMP biosynthesis via de novo pathway; 5-amino-1-(5-phospho-D-ribosyl)imidazole from N(2)-formyl-N(1)-(5-phospho-D-ribosyl)glycinamide: step 2/2. This is Phosphoribosylformylglycinamidine cyclo-ligase from Escherichia coli (strain SE11).